Here is a 370-residue protein sequence, read N- to C-terminus: Peptide chain release factor 1 (370 aa).

The residue at position 239 (glutamine 239) is an N5-methylglutamine.

Belongs to the prokaryotic/mitochondrial release factor family. Post-translationally, methylated by PrmC. Methylation increases the termination efficiency of RF1.

The protein localises to the cytoplasm. In terms of biological role, peptide chain release factor 1 directs the termination of translation in response to the peptide chain termination codons UAG and UAA. The sequence is that of Peptide chain release factor 1 from Bacteroides fragilis (strain ATCC 25285 / DSM 2151 / CCUG 4856 / JCM 11019 / LMG 10263 / NCTC 9343 / Onslow / VPI 2553 / EN-2).